The chain runs to 204 residues: Casparian strip membrane protein 3 (204 aa).

The Cytoplasmic segment spans residues 1–41 (MKNESTFIDVPADSSSAMKGKAPLIGVAKDHTASGSGGYNR). Residues 42–62 (GLSIFDFLLRLAAIVAASVAA) traverse the membrane as a helical segment. The Extracellular segment spans residues 63–92 (GTMFTSDETLPFFTQFLQFQAGYDDLPTFQ). The helical transmembrane segment at 93 to 113 (FFVISMSLVSGYIVLSLPISV) threads the bilayer. Residues 114-125 (VTIVRPLAAAPR) are Cytoplasmic-facing. The helical transmembrane segment at 126–146 (LLLLVLDTAVMGLTMAAASSA) threads the bilayer. The Extracellular segment spans residues 147–204 (AAISYVAHNGNQNTNWLPICQQFGDFCQKTSGGCGLFLCRRRVFHDPGCPLRSRSQRH).

Belongs to the Casparian strip membrane proteins (CASP) family. As to quaternary structure, homodimer and heterodimers.

Its subcellular location is the cell membrane. Functionally, regulates membrane-cell wall junctions and localized cell wall deposition. Required for establishment of the Casparian strip membrane domain (CSD) and the subsequent formation of Casparian strips, a cell wall modification of the root endodermis that determines an apoplastic barrier between the intraorganismal apoplasm and the extraorganismal apoplasm and prevents lateral diffusion. In Raphanus sativus (Radish), this protein is Casparian strip membrane protein 3.